Consider the following 407-residue polypeptide: Phosphopentomutase (407 aa).

Mn(2+)-binding residues include D11, D305, H310, D346, H347, and H358.

The protein belongs to the phosphopentomutase family. Mn(2+) serves as cofactor.

It is found in the cytoplasm. It carries out the reaction 2-deoxy-alpha-D-ribose 1-phosphate = 2-deoxy-D-ribose 5-phosphate. It catalyses the reaction alpha-D-ribose 1-phosphate = D-ribose 5-phosphate. It participates in carbohydrate degradation; 2-deoxy-D-ribose 1-phosphate degradation; D-glyceraldehyde 3-phosphate and acetaldehyde from 2-deoxy-alpha-D-ribose 1-phosphate: step 1/2. Functionally, isomerase that catalyzes the conversion of deoxy-ribose 1-phosphate (dRib-1-P) and ribose 1-phosphate (Rib-1-P) to deoxy-ribose 5-phosphate (dRib-5-P) and ribose 5-phosphate (Rib-5-P), respectively. The chain is Phosphopentomutase from Legionella pneumophila subsp. pneumophila (strain Philadelphia 1 / ATCC 33152 / DSM 7513).